The primary structure comprises 279 residues: Acetyl-coenzyme A carboxylase carboxyl transferase subunit beta (279 aa).

Residues 23 to 279 (LWWKCESCGA…LSQILGHLSS (257 aa)) form the CoA carboxyltransferase N-terminal domain. The Zn(2+) site is built by Cys27, Cys30, Cys46, and Cys49. A C4-type zinc finger spans residues 27-49 (CESCGAMLHKKQVEDHFYTCCEC).

The protein belongs to the AccD/PCCB family. In terms of assembly, acetyl-CoA carboxylase is a heterohexamer composed of biotin carboxyl carrier protein (AccB), biotin carboxylase (AccC) and two subunits each of ACCase subunit alpha (AccA) and ACCase subunit beta (AccD). Requires Zn(2+) as cofactor.

It is found in the cytoplasm. It carries out the reaction N(6)-carboxybiotinyl-L-lysyl-[protein] + acetyl-CoA = N(6)-biotinyl-L-lysyl-[protein] + malonyl-CoA. It functions in the pathway lipid metabolism; malonyl-CoA biosynthesis; malonyl-CoA from acetyl-CoA: step 1/1. Its function is as follows. Component of the acetyl coenzyme A carboxylase (ACC) complex. Biotin carboxylase (BC) catalyzes the carboxylation of biotin on its carrier protein (BCCP) and then the CO(2) group is transferred by the transcarboxylase to acetyl-CoA to form malonyl-CoA. This chain is Acetyl-coenzyme A carboxylase carboxyl transferase subunit beta, found in Prosthecochloris aestuarii (strain DSM 271 / SK 413).